The chain runs to 189 residues: Interferon alpha-8 (189 aa).

The N-terminal stretch at 1-23 (MALTFYLLVALVVLSYKSFSSLG) is a signal peptide. Cystine bridges form between cysteine 24–cysteine 122 and cysteine 52–cysteine 162.

This sequence belongs to the alpha/beta interferon family.

It is found in the secreted. Produced by macrophages, IFN-alpha have antiviral activities. Interferon stimulates the production of two enzymes: a protein kinase and an oligoadenylate synthetase. In Homo sapiens (Human), this protein is Interferon alpha-8 (IFNA8).